The following is a 316-amino-acid chain: 2-phospho-L-lactate guanylyltransferase (316 aa).

Over residues 72–85 the composition is skewed to low complexity; sequence TGVSTEAVSTSTST. Disordered regions lie at residues 72–107 and 119–138; these read TGVS…PTHT and LRDD…DGDK. Polar residues predominate over residues 92-107; the sequence is HNAASDNYVSQSPTHT.

It belongs to the CofC family. As to quaternary structure, homodimer.

The catalysed reaction is (2S)-2-phospholactate + GTP + H(+) = (2S)-lactyl-2-diphospho-5'-guanosine + diphosphate. Its pathway is cofactor biosynthesis; coenzyme F420 biosynthesis. Guanylyltransferase that catalyzes the activation of (2S)-2-phospholactate (2-PL) as (2S)-lactyl-2-diphospho-5'-guanosine, via the condensation of 2-PL with GTP. It is involved in the biosynthesis of coenzyme F420, a hydride carrier cofactor. The chain is 2-phospho-L-lactate guanylyltransferase from Haloquadratum walsbyi (strain DSM 16790 / HBSQ001).